Reading from the N-terminus, the 641-residue chain is Anthrax toxin receptor-like (641 aa).

An N-terminal signal peptide occupies residues 1-27; that stretch reads MMSHSPSMPCSALFLLLLLLLPPTFKG. At 28–363 the chain is on the extracellular side; sequence GSLRYHGPGW…ASQGIVFKRT (336 aa). Residues 76-247 enclose the VWFA domain; it reads DLYLVLDKSG…SALEGVVDPL (172 aa). A divalent metal cation contacts are provided by S84, S86, and T150. Residues 364–384 form a helical membrane-spanning segment; the sequence is WLMFLPVLLVTLLLLCCTWKL. The Cytoplasmic portion of the chain corresponds to 385 to 641; sequence CIKPKKLPPP…FPPISKGPKF (257 aa). The disordered stretch occupies residues 391–455; sequence LPPPPPKPEK…ARPPPAPLPA (65 aa). A compositionally biased stretch (pro residues) spans 407–436; that stretch reads PPPSSPPAPGRGPGPGPSAGPGPGPGPSPG.

The protein belongs to the ATR family.

Its subcellular location is the membrane. This Mus musculus (Mouse) protein is Anthrax toxin receptor-like (Antxrl).